We begin with the raw amino-acid sequence, 854 residues long: MGSLFRSETMCLAQLFLQSGTAYECLSVLGEKGLVEFRDLNQNVSSFQRKFVGEVKRCEELERILAYLVQEINRADIPLPEGDTSPPAPPLKQVLEMQEQLQKLEVELREVTKNKEKLRKNLLELIEYTHMLRVTKTFVKRNVEFEPTYEEFPPLENESLLDYSCMQRLGAKLGFVSGLINQGKVEAFEKMLWRVCKGYTIVTYAELDEPLEDPETGEVIKWYVFLISFWGEQIGHKVKKICDCYHCHVYPYPNTAEERREIQEGLNTRIQDLYTVLHKTEDYLRQVLCKAAESVYSRVIQVKKMKAIYHMLNMCSFDVTNKCLIAEVWCPEADLHELRRALEEGSRESGGTIPSFMNTIPTKETPPTLIRTNKFTEGFQNIVDAYGVGSYQEVNPALFTIITFPFLFAVMFGDFGHGFVMFLFALLLVLNENHPRLNQSQEIMRMFFNGRYILLLMGLFSVYTGLIYNDCFSKSVNLFGSRWNVSAMYSSSHSPEEQRKMVLWNDSIVRHHSVLQLDPSVPGVFRGPYPFGIDPIWNLATNRLTFLNSFKMKMSVILGITHMTFGVILGIFNHLHFRKKFNICLVSIPELLFMLCIFGYLIFMIIYKWLVYSAETSRTAPSILIEFISMFLFLASDTGGLYPGQEHVQRLLLLITVLSVPVLFLGKPLFLLWLHRGRSCFGVGRSGYTLVRKDSEEEVSLLGGQDIEEGNNQMEDGCREVTCEEFDFGEILMTQIIHSIEYCLGCISNTASYLRLWALSLAHAQLSEVLWAMLMHVGLRVDTAYGVLVLLPVIAFFAVLTIFILLIMEGLSAFLHAIRLHWVEFQNKFYVGAGTKFVPFSFRLLSSKFSDDLA.

Topologically, residues 1–393 (MGSLFRSETM…DAYGVGSYQE (393 aa)) are cytoplasmic. The helical transmembrane segment at 394-412 (VNPALFTIITFPFLFAVMF) threads the bilayer. Residues 413–414 (GD) are Vacuolar-facing. Residues 415 to 431 (FGHGFVMFLFALLLVLN) traverse the membrane as a helical segment. At 432–445 (ENHPRLNQSQEIMR) the chain is on the cytoplasmic side. The helical transmembrane segment at 446–475 (MFFNGRYILLLMGLFSVYTGLIYNDCFSKS) threads the bilayer. Topologically, residues 476 to 549 (VNLFGSRWNV…ATNRLTFLNS (74 aa)) are vacuolar. Residues 550 to 569 (FKMKMSVILGITHMTFGVIL) traverse the membrane as a helical segment. Topologically, residues 570 to 587 (GIFNHLHFRKKFNICLVS) are cytoplasmic. A helical membrane pass occupies residues 588–608 (IPELLFMLCIFGYLIFMIIYK). Over 609–651 (WLVYSAETSRTAPSILIEFISMFLFLASDTGGLYPGQEHVQRL) the chain is Vacuolar. Residues 652–671 (LLLITVLSVPVLFLGKPLFL) form a helical membrane-spanning segment. Over 672-739 (LWLHRGRSCF…EILMTQIIHS (68 aa)) the chain is Cytoplasmic. S695 and S700 each carry phosphoserine. The chain crosses the membrane as a helical span at residues 740–764 (IEYCLGCISNTASYLRLWALSLAHA). Over 765–785 (QLSEVLWAMLMHVGLRVDTAY) the chain is Vacuolar. A helical transmembrane segment spans residues 786–824 (GVLVLLPVIAFFAVLTIFILLIMEGLSAFLHAIRLHWVE). At 825 to 854 (FQNKFYVGAGTKFVPFSFRLLSSKFSDDLA) the chain is on the cytoplasmic side.

Belongs to the V-ATPase 116 kDa subunit family. V-ATPase is a heteromultimeric enzyme made up of two complexes: the ATP-hydrolytic V1 complex and the proton translocation V0 complex. The V1 complex consists of three catalytic AB heterodimers that form a heterohexamer, three peripheral stalks each consisting of EG heterodimers, one central rotor including subunits D and F, and the regulatory subunits C and H. The proton translocation complex V0 consists of the proton transport subunit a, a ring of proteolipid subunits c9c'', rotary subunit d, subunits e and f, and the accessory subunits ATP6AP1/Ac45 and ATP6AP2/PRR. Directly interacts with PSCD2 through its N-terminal cytosolic tail in an intra-endosomal acidification-dependent manner. Disruption of this interaction results in the inhibition of endocytosis. Interacts with SPAAR. As to expression, highly expressed in lung, kidney and spleen.

The protein resides in the cell membrane. It is found in the endosome membrane. In terms of biological role, subunit of the V0 complex of vacuolar(H+)-ATPase (V-ATPase), a multisubunit enzyme composed of a peripheral complex (V1) that hydrolyzes ATP and a membrane integral complex (V0) that translocates protons. V-ATPase is responsible for acidifying and maintaining the pH of intracellular compartments and in some cell types, is targeted to the plasma membrane, where it is responsible for acidifying the extracellular environment. Essential component of the endosomal pH-sensing machinery. May play a role in maintaining the Golgi functions, such as glycosylation maturation, by controlling the Golgi pH. In aerobic conditions, involved in intracellular iron homeostasis, thus triggering the activity of Fe(2+) prolyl hydroxylase (PHD) enzymes, and leading to HIF1A hydroxylation and subsequent proteasomal degradation. The polypeptide is V-type proton ATPase 116 kDa subunit a 2 (ATP6V0A2) (Bos taurus (Bovine)).